The chain runs to 655 residues: Inactive serine protease scarface (655 aa).

An N-terminal signal peptide occupies residues 1 to 24; the sequence is MSASHFREQLALCITLAVLAAASG. Polar residues-rich tracts occupy residues 213–225 and 237–252; these read TQAPFRPQPTTAV and PSTTQHPSYEKVQTSR. The disordered stretch occupies residues 213–319; that stretch reads TQAPFRPQPT…QPSNQKPIYR (107 aa). The CLIP stretch occupies residues 343–407; that stretch reads KCASALVCTS…PNYVDPWPVN (65 aa). Intrachain disulfides connect Cys344-Cys394, Cys350-Cys383, Cys356-Cys395, Cys450-Cys466, Cys547-Cys605, Cys579-Cys587, and Cys595-Cys623. In terms of domain architecture, Peptidase S1 spans 421 to 644; sequence PTGVKDLDAN…DIKWINTAFA (224 aa).

Belongs to the peptidase S1 family.

It is found in the secreted. Inactive serine protease that plays a role in germ-band retraction and dorsal closure morphogenesis in embryogenesis; contributes to amnioserosa attachment and epithelial apico-basal polarity by regulating the localization of laminin LanA on the apical side of the amnioserosa epithelium. Contributes to epithelial morphogenesis probably by regulating the bsk/JNK pathway, as part of a negative-feedback loop, and by modulating the cross-talk between the Egfr, bsk/JNK and dpp signal transduction pathways. In larval development, antagonizes the morphogenetic movements controlled by the bsk/JNK signaling including male genitalia formation and thorax development. This chain is Inactive serine protease scarface, found in Drosophila melanogaster (Fruit fly).